The sequence spans 357 residues: Alpha-2-macroglobulin receptor-associated protein (357 aa).

The N-terminal stretch at 1-34 is a signal peptide; it reads MAPRRVRSFLRGLPALLLLLLFLGPWPAASHGGK. The tract at residues 32–52 is disordered; the sequence is GGKYSREKNQPKPSPKRESGE. A compositionally biased stretch (basic and acidic residues) spans 35–52; sequence YSREKNQPKPSPKRESGE. Residues S50 and S135 each carry the phosphoserine modification. Residues 219–310 are a coiled coil; it reads SRHTELKEKL…AHEKLRHAES (92 aa). The segment at 237-353 is LDL receptor binding; the sequence is RLRRVSHQGY…DLSGRISRAR (117 aa). The residue at position 248 (T248) is a Phosphothreonine. The N-linked (GlcNAc...) asparagine glycan is linked to N268. A Prevents secretion from ER motif is present at residues 354 to 357; that stretch reads HNEL.

It belongs to the alpha-2-MRAP family. Interacts with the LRP1/alpha-2-macroglobulin receptor heavy and light chains; the interaction is transient and coincides with a reduction of ligand binding by the receptor. Interacts with LRP2/glycoprotein 330. Interacts with LRP1B; binding is followed by internalization and degradation. Interacts with LDLR. Interacts with SORL1. Interacts with LRP1; this interaction is followed by rapid internalization. In terms of processing, N-glycosylated.

It is found in the rough endoplasmic reticulum lumen. Its subcellular location is the endoplasmic reticulum-Golgi intermediate compartment lumen. The protein resides in the golgi apparatus. It localises to the cis-Golgi network. The protein localises to the golgi apparatus lumen. It is found in the endosome lumen. Its subcellular location is the cell surface. Molecular chaperone for LDL receptor-related proteins that may regulate their ligand binding activity along the secretory pathway. In Homo sapiens (Human), this protein is Alpha-2-macroglobulin receptor-associated protein.